We begin with the raw amino-acid sequence, 276 residues long: NH(3)-dependent NAD(+) synthetase (276 aa).

43–50 (GISGGVDS) is a binding site for ATP. Asp49 contributes to the Mg(2+) binding site. Arg146 contributes to the deamido-NAD(+) binding site. Thr166 serves as a coordination point for ATP. Glu171 provides a ligand contact to Mg(2+). Deamido-NAD(+)-binding residues include Lys179 and Asp186. The ATP site is built by Lys195 and Thr217. Residue 266–267 (HK) participates in deamido-NAD(+) binding.

The protein belongs to the NAD synthetase family. In terms of assembly, homodimer.

It catalyses the reaction deamido-NAD(+) + NH4(+) + ATP = AMP + diphosphate + NAD(+) + H(+). The protein operates within cofactor biosynthesis; NAD(+) biosynthesis; NAD(+) from deamido-NAD(+) (ammonia route): step 1/1. In terms of biological role, catalyzes the ATP-dependent amidation of deamido-NAD to form NAD. Uses ammonia as a nitrogen source. This Shewanella piezotolerans (strain WP3 / JCM 13877) protein is NH(3)-dependent NAD(+) synthetase.